The chain runs to 361 residues: Phospho-N-acetylmuramoyl-pentapeptide-transferase (361 aa).

10 consecutive transmembrane segments (helical) span residues isoleucine 27 to tryptophan 47, glycine 70 to tryptophan 90, serine 97 to tyrosine 117, tyrosine 134 to leucine 154, threonine 167 to serine 187, glycine 199 to serine 219, threonine 236 to tyrosine 256, valine 263 to valine 283, leucine 288 to valine 308, and lysine 338 to leucine 358.

Belongs to the glycosyltransferase 4 family. MraY subfamily. Requires Mg(2+) as cofactor.

It localises to the cell inner membrane. It carries out the reaction UDP-N-acetyl-alpha-D-muramoyl-L-alanyl-gamma-D-glutamyl-meso-2,6-diaminopimeloyl-D-alanyl-D-alanine + di-trans,octa-cis-undecaprenyl phosphate = di-trans,octa-cis-undecaprenyl diphospho-N-acetyl-alpha-D-muramoyl-L-alanyl-D-glutamyl-meso-2,6-diaminopimeloyl-D-alanyl-D-alanine + UMP. Its pathway is cell wall biogenesis; peptidoglycan biosynthesis. Catalyzes the initial step of the lipid cycle reactions in the biosynthesis of the cell wall peptidoglycan: transfers peptidoglycan precursor phospho-MurNAc-pentapeptide from UDP-MurNAc-pentapeptide onto the lipid carrier undecaprenyl phosphate, yielding undecaprenyl-pyrophosphoryl-MurNAc-pentapeptide, known as lipid I. This Legionella pneumophila (strain Lens) protein is Phospho-N-acetylmuramoyl-pentapeptide-transferase.